A 130-amino-acid polypeptide reads, in one-letter code: MYRALTRDIEVTVDPYYLEEQSDPDDDRYVWGYKVVIANNSDVPVKLVNRYWHITDQNGQVDEVYGPGVVGEQPQLKPGDSYEYSSGCPLDTPSGLMFGHYEMETENGEVFNVTIPAFSLDSPGLMRVLN.

An ApaG domain is found at 3 to 127; that stretch reads RALTRDIEVT…FSLDSPGLMR (125 aa).

This is Protein ApaG from Agrobacterium fabrum (strain C58 / ATCC 33970) (Agrobacterium tumefaciens (strain C58)).